The chain runs to 332 residues: Putative pumilio homolog 17 (332 aa).

The 302-residue stretch at 1 to 302 (MTNINRLSMS…ILTADLFYSL (302 aa)) folds into the PUM-HD domain. The stretch at 82–117 (SDSDYFMVITRNKNGSKSLQKLMRMSDDMDVFFFVA) is one Pumilio 1 repeat. The stretch at 118–152 (IMRLFIHVMIDKYASYVAIQGMRIFKQDKRELMYD) is one Pumilio 2; degenerate repeat. 4 Pumilio repeats span residues 153–188 (HILR…DELM), 189–225 (DIVS…NIAD), 226–264 (KLCG…DLLA), and 265–300 (CKTE…DLFY).

Its subcellular location is the cytoplasm. In terms of biological role, sequence-specific RNA-binding protein that regulates translation and mRNA stability by binding the 3'-UTR of target mRNAs. This is Putative pumilio homolog 17 (APUM17) from Arabidopsis thaliana (Mouse-ear cress).